The primary structure comprises 169 residues: Peptide methionine sulfoxide reductase MsrA (169 aa).

C11 is a catalytic residue.

Belongs to the MsrA Met sulfoxide reductase family.

It catalyses the reaction L-methionyl-[protein] + [thioredoxin]-disulfide + H2O = L-methionyl-(S)-S-oxide-[protein] + [thioredoxin]-dithiol. It carries out the reaction [thioredoxin]-disulfide + L-methionine + H2O = L-methionine (S)-S-oxide + [thioredoxin]-dithiol. Functionally, has an important function as a repair enzyme for proteins that have been inactivated by oxidation. Catalyzes the reversible oxidation-reduction of methionine sulfoxide in proteins to methionine. This chain is Peptide methionine sulfoxide reductase MsrA, found in Leifsonia xyli subsp. xyli (strain CTCB07).